Consider the following 216-residue polypeptide: MARSKTSLKWLQEHFNDPYVKKAQKDGYRSRASYKLLEIQDKDKLIRPGMSVIDLGAAPGGWSQVTSRLIGGQGRLIASDILEMDSIPDVTFVHGDFTQDTVLAQILEAVGNSQVDLVISDMAPNMSGLPAVDMPRAMFLCELALDLAGRVLRPGGDFLVKVFQGEGFDEYHKNIRKLFDKVQTRKPDSSRDRSREQYLLCRGFRGVEGAASEERF.

S-adenosyl-L-methionine is bound by residues G60, W62, D80, D96, and D121. K161 serves as the catalytic Proton acceptor.

This sequence belongs to the class I-like SAM-binding methyltransferase superfamily. RNA methyltransferase RlmE family.

The protein localises to the cytoplasm. The enzyme catalyses uridine(2552) in 23S rRNA + S-adenosyl-L-methionine = 2'-O-methyluridine(2552) in 23S rRNA + S-adenosyl-L-homocysteine + H(+). In terms of biological role, specifically methylates the uridine in position 2552 of 23S rRNA at the 2'-O position of the ribose in the fully assembled 50S ribosomal subunit. The chain is Ribosomal RNA large subunit methyltransferase E from Pseudomonas fluorescens (strain SBW25).